The sequence spans 109 residues: Iron-sulfur cluster assembly protein CyaY (109 aa).

It belongs to the frataxin family.

Its function is as follows. Involved in iron-sulfur (Fe-S) cluster assembly. May act as a regulator of Fe-S biogenesis. This chain is Iron-sulfur cluster assembly protein CyaY, found in Bordetella petrii (strain ATCC BAA-461 / DSM 12804 / CCUG 43448).